The chain runs to 75 residues: Large ribosomal subunit protein bL31 (75 aa).

It belongs to the bacterial ribosomal protein bL31 family. Type A subfamily. As to quaternary structure, part of the 50S ribosomal subunit.

Functionally, binds the 23S rRNA. This chain is Large ribosomal subunit protein bL31, found in Chlorobium phaeovibrioides (strain DSM 265 / 1930) (Prosthecochloris vibrioformis (strain DSM 265)).